The chain runs to 620 residues: UPF0313 protein BT_0254 (620 aa).

The region spanning 311–591 is the Radical SAM core domain; that stretch reads AYDMIKFSVN…AQRQFFFWYK (281 aa). C325, C329, and C332 together coordinate [4Fe-4S] cluster.

It belongs to the UPF0313 family. The cofactor is [4Fe-4S] cluster.

This chain is UPF0313 protein BT_0254, found in Bacteroides thetaiotaomicron (strain ATCC 29148 / DSM 2079 / JCM 5827 / CCUG 10774 / NCTC 10582 / VPI-5482 / E50).